A 412-amino-acid chain; its full sequence is 43 kDa receptor-associated protein of the synapse (412 aa).

The N-myristoyl glycine moiety is linked to residue glycine 2. 7 TPR repeats span residues 6–39 (TKQQ…SADP), 83–116 (TEGY…QGTT), 123–156 (GQVS…AHNN), 163–196 (CRVC…VNDY), 206–239 (AMSQ…ALQH), 246–279 (ALCL…MTEI), and 286–319 (IQVL…AEGL). Tyrosine 196 bears the Phosphotyrosine mark. The RING-type zinc-finger motif lies at 363–403 (CGMCGESIGEKNNQLQALPCSHFFHLKCLQTNGTRGCPNCR).

This sequence belongs to the RAPsyn family. In terms of tissue distribution, expressed in muscle fibers and in neurons.

It is found in the cell membrane. The protein localises to the postsynaptic cell membrane. The protein resides in the cytoplasm. Its subcellular location is the cytoskeleton. Postsynaptic protein required for clustering of nicotinic acetylcholine receptors (nAChRs) at the neuromuscular junction. It may link the receptor to the underlying postsynaptic cytoskeleton, possibly by direct association with actin or spectrin. This is 43 kDa receptor-associated protein of the synapse (RAPSN) from Gallus gallus (Chicken).